We begin with the raw amino-acid sequence, 418 residues long: MYQSPRGTEDILPEDQPYWHFVRQQAARIAALYGYQRTDTPVFEDAGLFVRSVGEGTDIVSKEMYTFEDRGGDKLTLRPEGTAPICRAYLEHGMQTRTKPVKLYYLSSIFRYDRPQAGRYRQHHQFGFEAIGEADASLDAEVIEMAWRFYNLLGINDLSLELNSIGCRECRPAYISALKAYYGQHEGKLCSDCKTRLDKNTLRLLDCKREECQCVAENAPRSADYLCPDCLAHYNRLKECLTVVDLPFHENFRLVRGLDYYSRTVFEIQPRIEGAQSTIGGGGRYDGLIEQLGGEPTPAIGFATGIERIILNLKRQGITPPPLPSPSVFLAYMGEAASLASIALASDLRKAGIGIYQTYAQKSIKAQLRQANSLGADWAVILGEEELKQGCAVLRNMKEAGQATIPLDQLICEIKKQI.

This sequence belongs to the class-II aminoacyl-tRNA synthetase family. In terms of assembly, homodimer.

The protein resides in the cytoplasm. It carries out the reaction tRNA(His) + L-histidine + ATP = L-histidyl-tRNA(His) + AMP + diphosphate + H(+). The polypeptide is Histidine--tRNA ligase (Dehalococcoides mccartyi (strain ATCC BAA-2266 / KCTC 15142 / 195) (Dehalococcoides ethenogenes (strain 195))).